Consider the following 56-residue polypeptide: Large ribosomal subunit protein eL40 (56 aa).

Belongs to the eukaryotic ribosomal protein eL40 family.

In Sulfurisphaera tokodaii (strain DSM 16993 / JCM 10545 / NBRC 100140 / 7) (Sulfolobus tokodaii), this protein is Large ribosomal subunit protein eL40.